Reading from the N-terminus, the 460-residue chain is Mitochondrial distribution and morphology protein 34 (460 aa).

An SMP-LTD domain is found at 1–196 (MSFKFDWESL…LPGIIHRLSQ (196 aa)). Residues 304–321 (HNHQAPKRRTIKYKRKSK) are compositionally biased toward basic residues. Disordered stretches follow at residues 304-356 (HNHQ…PSRE) and 368-460 (EPSS…AYSG). 2 stretches are compositionally biased toward low complexity: residues 330-355 (STEV…TPSR) and 393-405 (SPPS…DTSL).

This sequence belongs to the MDM34 family. As to quaternary structure, component of the ER-mitochondria encounter structure (ERMES) or MDM complex, composed of MMM1, MDM10, MDM12 and MDM34.

It localises to the mitochondrion outer membrane. In terms of biological role, component of the ERMES/MDM complex, which serves as a molecular tether to connect the endoplasmic reticulum (ER) and mitochondria. Components of this complex are involved in the control of mitochondrial shape and protein biogenesis, and function in nonvesicular lipid trafficking between the ER and mitochondria. MDM34 is required for the interaction of the ER-resident membrane protein MMM1 and the outer mitochondrial membrane-resident beta-barrel protein MDM10. This is Mitochondrial distribution and morphology protein 34 from Yarrowia lipolytica (strain CLIB 122 / E 150) (Yeast).